A 251-amino-acid chain; its full sequence is uncharacterized protein (251 aa).

The protein belongs to the PaiB family.

This is an uncharacterized protein from Emericella nidulans (strain FGSC A4 / ATCC 38163 / CBS 112.46 / NRRL 194 / M139) (Aspergillus nidulans).